A 516-amino-acid chain; its full sequence is GMP synthase [glutamine-hydrolyzing] (516 aa).

Residues lysine 6–aspartate 198 enclose the Glutamine amidotransferase type-1 domain. The active-site Nucleophile is the cysteine 83. Residues histidine 172 and glutamate 174 contribute to the active site. Residues tryptophan 199 to arginine 391 form the GMPS ATP-PPase domain. Residue serine 227–threonine 233 coordinates ATP.

In terms of assembly, homodimer.

The enzyme catalyses XMP + L-glutamine + ATP + H2O = GMP + L-glutamate + AMP + diphosphate + 2 H(+). Its pathway is purine metabolism; GMP biosynthesis; GMP from XMP (L-Gln route): step 1/1. Its function is as follows. Catalyzes the synthesis of GMP from XMP. The protein is GMP synthase [glutamine-hydrolyzing] of Oleidesulfovibrio alaskensis (strain ATCC BAA-1058 / DSM 17464 / G20) (Desulfovibrio alaskensis).